The following is a 236-amino-acid chain: Large ribosomal subunit protein uL3 (236 aa).

It belongs to the universal ribosomal protein uL3 family. Part of the 50S ribosomal subunit. Forms a cluster with proteins L14 and L19.

Its function is as follows. One of the primary rRNA binding proteins, it binds directly near the 3'-end of the 23S rRNA, where it nucleates assembly of the 50S subunit. This is Large ribosomal subunit protein uL3 from Mycoplasmoides gallisepticum (strain R(low / passage 15 / clone 2)) (Mycoplasma gallisepticum).